The chain runs to 162 residues: Phosphopantetheine adenylyltransferase (162 aa).

Residue Thr14 participates in substrate binding. ATP-binding positions include 14–15 (TF) and His22. Substrate is bound by residues Lys46, Leu78, and Arg92. ATP is bound by residues 93–95 (GLR), Glu103, and 128–134 (HSFISSS).

It belongs to the bacterial CoaD family. As to quaternary structure, homohexamer. The cofactor is Mg(2+).

It is found in the cytoplasm. The enzyme catalyses (R)-4'-phosphopantetheine + ATP + H(+) = 3'-dephospho-CoA + diphosphate. It participates in cofactor biosynthesis; coenzyme A biosynthesis; CoA from (R)-pantothenate: step 4/5. In terms of biological role, reversibly transfers an adenylyl group from ATP to 4'-phosphopantetheine, yielding dephospho-CoA (dPCoA) and pyrophosphate. The sequence is that of Phosphopantetheine adenylyltransferase from Xylella fastidiosa (strain 9a5c).